A 976-amino-acid chain; its full sequence is LRR receptor-like serine/threonine-protein kinase ERECTA (976 aa).

The N-terminal stretch at 1-24 (MALFRDIVLLGFLFCLSLVATVTS) is a signal peptide. Residues 25–580 (EEGATLLEIK…RRTVRVSISR (556 aa)) lie on the Extracellular side of the membrane. 2 N-linked (GlcNAc...) asparagine glycosylation sites follow: asparagine 65 and asparagine 74. LRR repeat units lie at residues 69–92 (NVVA…GDLK), 93–115 (SLLS…IGDC), 117–140 (SLQN…SKLK), 141–163 (QLEQ…LSQI), 165–187 (NLKI…IYWN), 189–212 (VLQY…CQLT), 213–235 (GLWY…IGNC), 237–259 (AFQV…IGFL), 260–282 (QVAT…IGLM), 284–306 (ALAV…LGNL), 308–330 (FTEK…LGNM), 332–355 (KLHY…GKLT), 356–379 (DLFD…SSCT), 380–401 (NLNS…AFQK), 404–425 (SMTY…ELSR), 428–449 (NLDT…SLGD), 452–473 (HLLK…DFGN), 476–498 (SIME…LNQL), 500–522 (NIIL…ANCL), and 523–545 (SLTV…NNFS). N-linked (GlcNAc...) asparagine glycans are attached at residues asparagine 221 and asparagine 234. N-linked (GlcNAc...) asparagine glycosylation is found at asparagine 305 and asparagine 329. Asparagine 409 carries N-linked (GlcNAc...) asparagine glycosylation. Asparagine 457 carries N-linked (GlcNAc...) asparagine glycosylation. Residues asparagine 510, asparagine 528, and asparagine 543 are each glycosylated (N-linked (GlcNAc...) asparagine). The chain crosses the membrane as a helical span at residues 581–601 (AAILGIAIGGLVILLMVLIAA). Over 602-976 (CRPHNPPPFL…FGQVISQNSE (375 aa)) the chain is Cytoplasmic. The residue at position 645 (threonine 645) is a Phosphothreonine. The region spanning 648-918 (LSEKYIIGHG…QVTRVLGSFM (271 aa)) is the Protein kinase domain. ATP-binding positions include 654-662 (IGHGASSTV) and lysine 676. Residues tyrosine 721 and tyrosine 760 each carry the phosphotyrosine modification. The Proton acceptor role is filled by aspartate 773. At tyrosine 815 the chain carries Phosphotyrosine. Threonine 823 carries the post-translational modification Phosphothreonine.

Belongs to the protein kinase superfamily. Ser/Thr protein kinase family. Homodimer and heterodimer with ERL1 and TMM. Interacts with EPF1, EPF2, EPFL4, EPFL5 and EPFL6. Interacts with SERK1, SERK2, SERK3/BAK1 and SERK4 in a EPF2-induced manner. Interacts with EPFL9/STOMAGEN. In terms of tissue distribution, mostly expressed in shoot apical meristems (SAM), organ primordia, flowers, siliques and young rosette leaves, and, to a lower extent, in stems and cauline leaves. Expressed in growing inflorescence stems and pedicels. Detected in epidermis, phloem and xylem.

Its subcellular location is the cell membrane. The enzyme catalyses L-seryl-[protein] + ATP = O-phospho-L-seryl-[protein] + ADP + H(+). The catalysed reaction is L-threonyl-[protein] + ATP = O-phospho-L-threonyl-[protein] + ADP + H(+). Functionally, receptor kinase that, together with ERL1 and ERL2, regulates aerial architecture, including inflorescence (e.g. shoot apical meristem-originating organ shape, elongation of the internode and pedicels, and adaxial-abaxial polarity), and stomatal patterning (e.g. density and clustering), probably by tuning cell division and expansion. Redundantly involved with ERL1 in procambial development regulation. Forms a functional ligand-receptor pair with EPF2 (AC Q8LC53). Modulates plant transpiration efficiency by controlling stomatal density, leaf photosynthetic capacity, epidermal cell expansion, mesophyll cell proliferation and cell-cell contact. A phloem-specific expression of ER is sufficient for proper inflorescence architecture. Probable major trait regulating canalization (maintenance of phenotype despite varying environment) in many aspect of the plant physiology (e.g. plant morphology, light-dependent leaves number, branch number, flowering time, phytate and mineral concentrations) by transducing microenvironmental variation into phenotypic differentiation (ecological amplifier). May maintain development integrity in heat stress conditions. Regulates cell wall composition and structure. Confers resistance to the pathogenic bacteria Ralstonia solanacearum and to the necrotrophic fungi Plectosphaerella cucumerina and Pythium irregulare, and required for callose deposition upon infection. Resistance to P.cucumerina seems cell wall-mediated. Forms a constitutive complex with TMM involved in the recognition of the stomatal regulatory peptides EPF1, EPF2 and EPFL9/STOMAGEN. This is LRR receptor-like serine/threonine-protein kinase ERECTA from Arabidopsis thaliana (Mouse-ear cress).